Here is a 225-residue protein sequence, read N- to C-terminus: Nucleolar protein 6 (225 aa).

The segment at 1–75 is disordered; that stretch reads MGSEEDKKLT…GGKGKNGKKG (75 aa). The span at 9–20 shows a compositional bias: basic residues; that stretch reads LTKKQLKAQQFR. Residues 21-42 are compositionally biased toward basic and acidic residues; the sequence is KSKEEKDQEKDVKKEQAPEGKR. Ser45 is modified (phosphoserine). Over residues 56–75 the composition is skewed to basic residues; the sequence is KKKRKTRRGRGGKGKNGKKG. Positions 78 to 155 constitute an RRM domain; the sequence is FIVFVGSLPR…KKINVELTVG (78 aa). Ser160 carries the phosphoserine modification. Residues 187 to 225 are disordered; the sequence is NDGNQKKIAKTTATAAQTSGTDNKPVPAGIHPDRAKLLK.

This sequence belongs to the RRM NOP6 family.

Its subcellular location is the nucleus. The protein localises to the nucleolus. Its function is as follows. Predicted to be involved in rRNA processing. The chain is Nucleolar protein 6 (NOP6) from Saccharomyces cerevisiae (strain ATCC 204508 / S288c) (Baker's yeast).